Consider the following 748-residue polypeptide: Translation factor GUF1 homolog 2, mitochondrial (748 aa).

A mitochondrion-targeting transit peptide spans Met-1–Trp-29. The 183-residue stretch at Ser-94–Thr-276 folds into the tr-type G domain. GTP-binding positions include Ala-103–Thr-110, Asp-167–His-171, and Thr-221–Asp-224.

The protein belongs to the TRAFAC class translation factor GTPase superfamily. Classic translation factor GTPase family. LepA subfamily.

The protein localises to the mitochondrion inner membrane. The catalysed reaction is GTP + H2O = GDP + phosphate + H(+). In terms of biological role, promotes mitochondrial protein synthesis. May act as a fidelity factor of the translation reaction, by catalyzing a one-codon backward translocation of tRNAs on improperly translocated ribosomes. Binds to mitochondrial ribosomes in a GTP-dependent manner. This Trypanosoma cruzi (strain CL Brener) protein is Translation factor GUF1 homolog 2, mitochondrial.